We begin with the raw amino-acid sequence, 229 residues long: 2-C-methyl-D-erythritol 4-phosphate cytidylyltransferase (229 aa).

Belongs to the IspD/TarI cytidylyltransferase family. IspD subfamily.

It catalyses the reaction 2-C-methyl-D-erythritol 4-phosphate + CTP + H(+) = 4-CDP-2-C-methyl-D-erythritol + diphosphate. It functions in the pathway isoprenoid biosynthesis; isopentenyl diphosphate biosynthesis via DXP pathway; isopentenyl diphosphate from 1-deoxy-D-xylulose 5-phosphate: step 2/6. Its function is as follows. Catalyzes the formation of 4-diphosphocytidyl-2-C-methyl-D-erythritol from CTP and 2-C-methyl-D-erythritol 4-phosphate (MEP). The sequence is that of 2-C-methyl-D-erythritol 4-phosphate cytidylyltransferase from Neisseria meningitidis serogroup B (strain ATCC BAA-335 / MC58).